A 90-amino-acid chain; its full sequence is NELL2-interacting cell ontogeny regulator 1 (90 aa).

Residues 1-26 form the signal peptide; sequence MVSSGYLQAVMLLLAVQLLCFRPSDA.

This sequence belongs to the NICOL family.

The protein resides in the secreted. In terms of biological role, mRNA-binding protein which interacts with a range of target mRNAs and may promote extracellular matrix production. In Salmo salar (Atlantic salmon), this protein is NELL2-interacting cell ontogeny regulator 1.